We begin with the raw amino-acid sequence, 185 residues long: Small ribosomal subunit protein uS4c (185 aa).

The S4 RNA-binding domain maps to 72-134; the sequence is MRLDNVIFRL…PTSCNALKGE (63 aa). A disordered region spans residues 132 to 154; the sequence is KGESPGGGETPDHLTASLSEGSR.

The protein belongs to the universal ribosomal protein uS4 family. In terms of assembly, part of the 30S ribosomal subunit. Contacts protein S5. The interaction surface between S4 and S5 is involved in control of translational fidelity.

It localises to the plastid. It is found in the chloroplast. In terms of biological role, one of the primary rRNA binding proteins, it binds directly to 16S rRNA where it nucleates assembly of the body of the 30S subunit. Functionally, with S5 and S12 plays an important role in translational accuracy. The chain is Small ribosomal subunit protein uS4c (rps4) from Woodwardia unigemmata (Chainfern).